Consider the following 185-residue polypeptide: ATP-dependent protease subunit HslV (185 aa).

Residue Thr-12 is part of the active site. Na(+) contacts are provided by Ala-168, Cys-171, and Thr-174.

The protein belongs to the peptidase T1B family. HslV subfamily. As to quaternary structure, a double ring-shaped homohexamer of HslV is capped on each side by a ring-shaped HslU homohexamer. The assembly of the HslU/HslV complex is dependent on binding of ATP.

The protein localises to the cytoplasm. The catalysed reaction is ATP-dependent cleavage of peptide bonds with broad specificity.. Its activity is regulated as follows. Allosterically activated by HslU binding. Functionally, protease subunit of a proteasome-like degradation complex believed to be a general protein degrading machinery. This Cereibacter sphaeroides (strain ATCC 17029 / ATH 2.4.9) (Rhodobacter sphaeroides) protein is ATP-dependent protease subunit HslV.